A 622-amino-acid polypeptide reads, in one-letter code: Chaperone protein HscA homolog (622 aa).

It belongs to the heat shock protein 70 family.

In terms of biological role, chaperone involved in the maturation of iron-sulfur cluster-containing proteins. Has a low intrinsic ATPase activity which is markedly stimulated by HscB. This is Chaperone protein HscA homolog from Verminephrobacter eiseniae (strain EF01-2).